Reading from the N-terminus, the 348-residue chain is D-alanine--D-alanine ligase (348 aa).

An ATP-grasp domain is found at 132–334 (KRVLESIGIP…YPDLIEVLVT (203 aa)). ATP is bound at residue 162–217 (LARLTFPIFVKPANMGSSVGISKAQTKVELRKAIQLALTYDSRVLIEQGVVAREIE). Mg(2+)-binding residues include Asp288, Glu301, and Asn303.

Belongs to the D-alanine--D-alanine ligase family. Requires Mg(2+) as cofactor. It depends on Mn(2+) as a cofactor.

It is found in the cytoplasm. The catalysed reaction is 2 D-alanine + ATP = D-alanyl-D-alanine + ADP + phosphate + H(+). Its pathway is cell wall biogenesis; peptidoglycan biosynthesis. Its function is as follows. Cell wall formation. The chain is D-alanine--D-alanine ligase from Streptococcus pyogenes serotype M2 (strain MGAS10270).